The chain runs to 445 residues: Xylose isomerase (445 aa).

Residues H109 and D112 contribute to the active site. Positions 240, 276, 279, 304, 315, 317, and 347 each coordinate Mg(2+).

This sequence belongs to the xylose isomerase family. In terms of assembly, homotetramer. Mg(2+) is required as a cofactor.

It localises to the cytoplasm. It catalyses the reaction alpha-D-xylose = alpha-D-xylulofuranose. This chain is Xylose isomerase, found in Xanthomonas oryzae pv. oryzae (strain MAFF 311018).